A 323-amino-acid polypeptide reads, in one-letter code: Serine acetyltransferase 2 (323 aa).

The disordered stretch occupies residues Ala302 to Ser323. Positions Asp313–Ser323 are enriched in basic and acidic residues.

It belongs to the transferase hexapeptide repeat family. Homomultimer. Ubiquitously expressed at low levels. Localized in vascular tissues, particularly in phloem.

The protein resides in the cytoplasm. It carries out the reaction L-serine + acetyl-CoA = O-acetyl-L-serine + CoA. Its pathway is amino-acid biosynthesis; L-cysteine biosynthesis; L-cysteine from L-serine: step 1/2. The polypeptide is Serine acetyltransferase 2 (Arabidopsis thaliana (Mouse-ear cress)).